Reading from the N-terminus, the 458-residue chain is 5-hydroxytryptamine receptor 2C (458 aa).

The first 32 residues, 1-32 (MVNLRKAVHSFLVHLIGLLVWQCDISVSPVAA), serve as a signal peptide directing secretion. Topologically, residues 33–55 (LVTDIFNTSDGGRFKFPDGVQNW) are extracellular. The helical transmembrane segment at 56–80 (PALSIVIIIILTIGGNILVIMAVSL) threads the bilayer. Residues 81–86 (EKKLHN) are Cytoplasmic-facing. The chain crosses the membrane as a helical span at residues 87–111 (ATNYFLMSLAIADMLVGLLVMPLSL). Residues 112–128 (LAILYDYVWPLPRYLCP) are Extracellular-facing. A disulfide bridge links cysteine 127 with cysteine 207. Residues 129 to 151 (VWISLDVLFSTASIMHLCAISLD) traverse the membrane as a helical segment. Residue threonine 139 coordinates ergotamine. The short motif at 151–153 (DRY) is the DRY motif; important for ligand-induced conformation changes element. Residues 152–167 (RYVAIRNPVEHSRFNS) are Cytoplasmic-facing. The chain crosses the membrane as a helical span at residues 168–189 (RTKAIMKIAIVWAISIGVSVPI). At 190-213 (PVIGLRDEEKVFVNNTTCVLNDPN) the chain is on the extracellular side. Residues asparagine 203 and asparagine 204 are each glycosylated (N-linked (GlcNAc...) asparagine). Position 209 (leucine 209) interacts with ergotamine. A helical membrane pass occupies residues 214 to 236 (FVLIGSFVAFFIPLTIMVITYCL). The Cytoplasmic segment spans residues 237–311 (TIHVLRRQAL…AINNERKASK (75 aa)). The disordered stretch occupies residues 272–301 (TEEENSANPNQDSNPRRRKKKERRPRGTMQ). Basic residues predominate over residues 287 to 297 (RRRKKKERRPR). A helical membrane pass occupies residues 312–336 (VLGIVFFVFLVMWCPFFITNILSVL). Cysteines 337 and 341 form a disulfide. Topologically, residues 337-347 (CGKACNQKLME) are extracellular. A helical transmembrane segment spans residues 348–370 (KLLNVFVWIGYVCSGINPLVYTL). The NPxxY motif; important for ligand-induced conformation changes and signaling motif lies at 364–368 (NPLVY). At 371–458 (FNKIYRRAFS…SVVSERISSV (88 aa)) the chain is on the cytoplasmic side. Positions 456–458 (SSV) match the PDZ-binding motif.

Belongs to the G-protein coupled receptor 1 family. Interacts with MPDZ. Interacts with ARRB2. Interacts with MPP3; this interaction stabilizes the receptor at the plasma membrane and prevents the desensitization of the HTR2C receptor-mediated calcium response.

It localises to the cell membrane. G-protein coupled receptor for 5-hydroxytryptamine (serotonin). Also functions as a receptor for various drugs and psychoactive substances, including ergot alkaloid derivatives, 1-2,5,-dimethoxy-4-iodophenyl-2-aminopropane (DOI) and lysergic acid diethylamide (LSD). Ligand binding causes a conformation change that triggers signaling via guanine nucleotide-binding proteins (G proteins) and modulates the activity of downstream effectors. HTR2C is coupled to G(q)/G(11) G alpha proteins and activates phospholipase C-beta, releasing diacylglycerol (DAG) and inositol 1,4,5-trisphosphate (IP3) second messengers that modulate the activity of phosphatidylinositol 3-kinase and promote the release of Ca(2+) ions from intracellular stores, respectively. Beta-arrestin family members inhibit signaling via G proteins and mediate activation of alternative signaling pathways. Regulates neuronal activity via the activation of short transient receptor potential calcium channels in the brain, and thereby modulates the activation of pro-opiomelanocortin neurons and the release of CRH that then regulates the release of corticosterone. Plays a role in the regulation of appetite and eating behavior, responses to anxiogenic stimuli and stress. Plays a role in insulin sensitivity and glucose homeostasis. This Canis lupus familiaris (Dog) protein is 5-hydroxytryptamine receptor 2C.